The primary structure comprises 223 residues: Killer cell lectin-like receptor subfamily B member 1A (223 aa).

The Cytoplasmic portion of the chain corresponds to 1–43; the sequence is MDTARVYLSLKPSKTAAGAQCVSPPSLPPDACRCPRSHRLALK. Positions 32 to 35 match the LCK-binding motif motif; that stretch reads CRCP. Residues 44–63 traverse the membrane as a helical; Signal-anchor for type II membrane protein segment; it reads LSCAGLILLVLALVGMSILV. The Extracellular segment spans residues 64-223; the sequence is RVLVQKPSVE…LKCECMCNDS (160 aa). One can recognise a C-type lectin domain in the interval 93 to 212; it reads KCPKDWLSHR…DSDNIWVCQK (120 aa). Cystine bridges form between Cys-94–Cys-105, Cys-122–Cys-210, and Cys-189–Cys-202.

In terms of assembly, homodimer; disulfide-linked. Interacts with tyrosine kinase LCK. Expressed in natural killer cells.

It is found in the membrane. In terms of biological role, plays a stimulatory role on natural killer (NK) cell cytotoxicity. The chain is Killer cell lectin-like receptor subfamily B member 1A (Klrb1a) from Rattus norvegicus (Rat).